A 337-amino-acid polypeptide reads, in one-letter code: Anthranilate phosphoribosyltransferase (337 aa).

Residues Gly81, 84-85 (GD), Ser89, 91-94 (NVST), 109-117 (KHGNRAASS), and Ala121 contribute to the 5-phospho-alpha-D-ribose 1-diphosphate site. Gly81 is a binding site for anthranilate. Ser93 is a Mg(2+) binding site. Asn112 contributes to the anthranilate binding site. Arg167 serves as a coordination point for anthranilate. Mg(2+)-binding residues include Asp226 and Glu227.

It belongs to the anthranilate phosphoribosyltransferase family. Homodimer. Mg(2+) is required as a cofactor.

It carries out the reaction N-(5-phospho-beta-D-ribosyl)anthranilate + diphosphate = 5-phospho-alpha-D-ribose 1-diphosphate + anthranilate. Its pathway is amino-acid biosynthesis; L-tryptophan biosynthesis; L-tryptophan from chorismate: step 2/5. Functionally, catalyzes the transfer of the phosphoribosyl group of 5-phosphorylribose-1-pyrophosphate (PRPP) to anthranilate to yield N-(5'-phosphoribosyl)-anthranilate (PRA). The sequence is that of Anthranilate phosphoribosyltransferase from Methylobacterium nodulans (strain LMG 21967 / CNCM I-2342 / ORS 2060).